A 502-amino-acid polypeptide reads, in one-letter code: Membrane protein insertase YidC (502 aa).

6 helical membrane passes run 12-32 (FLIFTILMFLFITAYELFYIY), 286-306 (LDWGTLKIIVKPLFLFLYWIY), 312-332 (WVLSILVLTFIVRIFLFPLGY), 382-402 (LPILLQIPIFFALYKVLIITV), 409-429 (FLWIPSLADKDPYYILPVIMG), and 452-472 (ITSVAFTLLFINFPAGLVLYW).

It belongs to the OXA1/ALB3/YidC family. Type 1 subfamily. Interacts with the Sec translocase complex via SecD. Specifically interacts with transmembrane segments of nascent integral membrane proteins during membrane integration.

The protein localises to the cell membrane. In terms of biological role, required for the insertion and/or proper folding and/or complex formation of integral membrane proteins into the membrane. Involved in integration of membrane proteins that insert both dependently and independently of the Sec translocase complex, as well as at least some lipoproteins. Aids folding of multispanning membrane proteins. The protein is Membrane protein insertase YidC of Aquifex aeolicus (strain VF5).